Reading from the N-terminus, the 544-residue chain is MASALRRLVEQQQWRYLVSQSTRSPKLIHGFFSFSSKTNPNPNKQQQILIDYISKSLQSNDTWETLSTKFSSIDLSDSLIETILLRFKNPETAKQALSFFHWSSHTRNLRHGIKSYALTIHILVKARLLIDARALIESSLLNSPPDSDLVDSLLDTYEISSSTPLVFDLLVQCYAKIRYLELGFDVFKRLCDCGFTLSVITLNTLIHYSSKSKIDDLVWRIYECAIDKRIYPNEITIRIMIQVLCKEGRLKEVVDLLDRICGKRCLPSVIVNTSLVFRVLEEMRIEESMSLLKRLLMKNMVVDTIGYSIVVYAKAKEGDLVSARKVFDEMLQRGFSANSFVYTVFVRVCCEKGDVKEAERLLSEMEESGVSPYDETFNCLIGGFARFGWEEKGLEYCEVMVTRGLMPSCSAFNEMVKSVSKIENVNRANEILTKSIDKGFVPDEHTYSHLIRGFIEGNDIDQALKLFYEMEYRKMSPGFEVFRSLIVGLCTCGKVEAGEKYLKIMKKRLIEPNADIYDALIKAFQKIGDKTNADRVYNEMISVR.

The transit peptide at 1–116 (MASALRRLVE…RNLRHGIKSY (116 aa)) directs the protein to the mitochondrion. 11 PPR repeats span residues 163 to 197 (TPLV…GFTL), 198 to 232 (SVIT…RIYP), 233 to 267 (NEIT…RCLP), 268 to 302 (SVIV…NMVV), 303 to 337 (DTIG…GFSA), 338 to 372 (NSFV…GVSP), 373 to 407 (YDET…GLMP), 408 to 442 (SCSA…GFVP), 443 to 477 (DEHT…KMSP), 478 to 512 (GFEV…LIEP), and 513 to 544 (NADI…ISVR).

Belongs to the PPR family. P subfamily.

Its subcellular location is the mitochondrion. The protein is Pentatricopeptide repeat-containing protein At1g66345, mitochondrial of Arabidopsis thaliana (Mouse-ear cress).